Here is a 767-residue protein sequence, read N- to C-terminus: Cilium assembly protein DZIP1L (767 aa).

The tract at residues 122-144 is disordered; the sequence is QQRGQQELGRQADELKGVREESR. Residues 131–144 are compositionally biased toward basic and acidic residues; it reads RQADELKGVREESR. The C2H2-type zinc-finger motif lies at 166–189; it reads HTCHLCDKTFMNATFLRGHIQRRH. Residues 205 to 406 are a coiled coil; that stretch reads VEEVLEELRA…SQEEMIQSLS (202 aa). Serine 426 carries the post-translational modification Phosphoserine. The tract at residues 518 to 767 is disordered; sequence SRAKERQENG…SSGQPRVPAW (250 aa). 2 stretches are compositionally biased toward polar residues: residues 533–547 and 574–588; these read PDGQPSVKSQQSTLV and RQSHGSHGSSLTQVS. Low complexity predominate over residues 607 to 616; the sequence is GPGMSTPPFS. Residues 658–675 show a composition bias toward polar residues; the sequence is ENAQPPGQGSGTLVQSMV. The segment covering 677-686 has biased composition (basic and acidic residues); it reads NLEKQLEAPA.

It belongs to the DZIP C2H2-type zinc-finger protein family. Interacts with SEPTIN2.

The protein localises to the cytoplasm. Its subcellular location is the cytoskeleton. It localises to the cilium basal body. The protein resides in the microtubule organizing center. It is found in the centrosome. The protein localises to the centriole. In terms of biological role, involved in primary cilium formation. Probably acts as a transition zone protein required for localization of PKD1/PC1 and PKD2/PC2 to the ciliary membrane. This Homo sapiens (Human) protein is Cilium assembly protein DZIP1L.